We begin with the raw amino-acid sequence, 557 residues long: Dihydroxy-acid dehydratase (557 aa).

Cysteine 50 provides a ligand contact to [2Fe-2S] cluster. Aspartate 82 contacts Mg(2+). Cysteine 123 lines the [2Fe-2S] cluster pocket. Positions 124 and 125 each coordinate Mg(2+). Lysine 125 carries the post-translational modification N6-carboxylysine. Cysteine 195 contributes to the [2Fe-2S] cluster binding site. Position 447 (glutamate 447) interacts with Mg(2+). Serine 473 serves as the catalytic Proton acceptor.

This sequence belongs to the IlvD/Edd family. Homodimer. It depends on [2Fe-2S] cluster as a cofactor. The cofactor is Mg(2+).

The catalysed reaction is (2R)-2,3-dihydroxy-3-methylbutanoate = 3-methyl-2-oxobutanoate + H2O. The enzyme catalyses (2R,3R)-2,3-dihydroxy-3-methylpentanoate = (S)-3-methyl-2-oxopentanoate + H2O. It functions in the pathway amino-acid biosynthesis; L-isoleucine biosynthesis; L-isoleucine from 2-oxobutanoate: step 3/4. The protein operates within amino-acid biosynthesis; L-valine biosynthesis; L-valine from pyruvate: step 3/4. Functionally, functions in the biosynthesis of branched-chain amino acids. Catalyzes the dehydration of (2R,3R)-2,3-dihydroxy-3-methylpentanoate (2,3-dihydroxy-3-methylvalerate) into 2-oxo-3-methylpentanoate (2-oxo-3-methylvalerate) and of (2R)-2,3-dihydroxy-3-methylbutanoate (2,3-dihydroxyisovalerate) into 2-oxo-3-methylbutanoate (2-oxoisovalerate), the penultimate precursor to L-isoleucine and L-valine, respectively. This Metallosphaera sedula (strain ATCC 51363 / DSM 5348 / JCM 9185 / NBRC 15509 / TH2) protein is Dihydroxy-acid dehydratase.